The following is a 464-amino-acid chain: ATP synthase subunit beta (464 aa).

148 to 155 (GGAGVGKT) contacts ATP.

The protein belongs to the ATPase alpha/beta chains family. F-type ATPases have 2 components, CF(1) - the catalytic core - and CF(0) - the membrane proton channel. CF(1) has five subunits: alpha(3), beta(3), gamma(1), delta(1), epsilon(1). CF(0) has three main subunits: a(1), b(2) and c(9-12). The alpha and beta chains form an alternating ring which encloses part of the gamma chain. CF(1) is attached to CF(0) by a central stalk formed by the gamma and epsilon chains, while a peripheral stalk is formed by the delta and b chains.

It localises to the cell inner membrane. It catalyses the reaction ATP + H2O + 4 H(+)(in) = ADP + phosphate + 5 H(+)(out). Produces ATP from ADP in the presence of a proton gradient across the membrane. The catalytic sites are hosted primarily by the beta subunits. The protein is ATP synthase subunit beta of Marinobacter nauticus (strain ATCC 700491 / DSM 11845 / VT8) (Marinobacter aquaeolei).